A 260-amino-acid chain; its full sequence is Uroplakin-1b (260 aa).

Residues alanine 2–leucine 15 lie on the Cytoplasmic side of the membrane. Residues isoleucine 16 to phenylalanine 36 form a helical membrane-spanning segment. The Extracellular portion of the chain corresponds to valine 37 to tryptophan 60. A helical membrane pass occupies residues isoleucine 61–methionine 81. Topologically, residues lysine 82 to lysine 86 are cytoplasmic. Residues isoleucine 87–isoleucine 107 traverse the membrane as a helical segment. The Extracellular portion of the chain corresponds to threonine 108–histidine 229. Residues alanine 230–glycine 250 traverse the membrane as a helical segment. At threonine 251–tyrosine 260 the chain is on the cytoplasmic side.

Belongs to the tetraspanin (TM4SF) family. In terms of assembly, heterodimer with uroplakin-3A (UPK3A) or uroplakin-3B (UPK3B). Post-translationally, N-glycosylated with high-mannose oligosaccharides. As to expression, bladder epithelium.

The protein localises to the membrane. Its function is as follows. Component of the asymmetric unit membrane (AUM); a highly specialized biomembrane elaborated by terminally differentiated urothelial cells. May play an important role in normal bladder epithelial physiology, possibly in regulating membrane permeability of superficial umbrella cells or in stabilizing the apical membrane through AUM/cytoskeletal interactions. The protein is Uroplakin-1b (UPK1B) of Bos taurus (Bovine).